The chain runs to 411 residues: Argininosuccinate synthase (411 aa).

Residues 13–21 (AYSGGLDTS) and Ala-40 contribute to the ATP site. L-citrulline contacts are provided by Tyr-91 and Ser-96. Gly-121 lines the ATP pocket. L-aspartate contacts are provided by Thr-123, Asn-127, and Asp-128. Asn-127 contributes to the L-citrulline binding site. Arg-131, Ser-182, Ser-191, Glu-267, and Tyr-279 together coordinate L-citrulline.

This sequence belongs to the argininosuccinate synthase family. Type 1 subfamily. Homotetramer.

It is found in the cytoplasm. It carries out the reaction L-citrulline + L-aspartate + ATP = 2-(N(omega)-L-arginino)succinate + AMP + diphosphate + H(+). It participates in amino-acid biosynthesis; L-arginine biosynthesis; L-arginine from L-ornithine and carbamoyl phosphate: step 2/3. This is Argininosuccinate synthase from Bartonella tribocorum (strain CIP 105476 / IBS 506).